A 66-amino-acid chain; its full sequence is Large ribosomal subunit protein bL33c (66 aa).

This sequence belongs to the bacterial ribosomal protein bL33 family.

The protein localises to the plastid. It localises to the chloroplast. This Carica papaya (Papaya) protein is Large ribosomal subunit protein bL33c.